The primary structure comprises 84 residues: Molybdopterin synthase sulfur carrier subunit (84 aa).

The residue at position 84 (Gly84) is a 1-thioglycine; alternate. Gly84 carries the glycyl adenylate; alternate modification.

The protein belongs to the MoaD family. MOCS2A subfamily. As to quaternary structure, heterotetramer; composed of 2 small (MOCS2A) and 2 large (MOCS2B) subunits. C-terminal thiocarboxylation occurs in 2 steps, it is first acyl-adenylated (-COAMP) via the hesA/moeB/thiF part of MOCS3, then thiocarboxylated (-COSH) via the rhodanese domain of MOCS3.

The protein resides in the cytoplasm. It functions in the pathway cofactor biosynthesis; molybdopterin biosynthesis. Its function is as follows. Acts as a sulfur carrier required for molybdopterin biosynthesis. Component of the molybdopterin synthase complex that catalyzes the conversion of precursor Z into molybdopterin by mediating the incorporation of 2 sulfur atoms into precursor Z to generate a dithiolene group. In the complex, serves as sulfur donor by being thiocarboxylated (-COSH) at its C-terminus by MOCS3. After interaction with MOCS2B, the sulfur is then transferred to precursor Z to form molybdopterin. This Caenorhabditis briggsae protein is Molybdopterin synthase sulfur carrier subunit.